The sequence spans 3097 residues: Neural-cadherin (3097 aa).

The first 36 residues, 1-36 (MAARRCLNQLRQRYITNRFNICTCAIFLISLPFILA), serve as a signal peptide directing secretion. 2 N-linked (GlcNAc...) asparagine glycosylation sites follow: N97 and N150. A Cadherin 1 domain is found at 181–305 (VRENQPAGTR…LDENDNRPIF (125 aa)). N325 and N426 each carry an N-linked (GlcNAc...) asparagine glycan. 15 consecutive Cadherin domains span residues 430–543 (HREK…PPYF), 554–651 (VQLN…APQF), 660–756 (IPEN…APKF), 766–858 (VDED…EPKF), 867–968 (VDEN…KPVF), 978–1078 (VEEG…PPLF), 1087–1183 (VKQD…PPVW), 1193–1299 (VKEN…IPLF), 1307–1414 (VLEG…PPYF), 1423–1514 (VDEN…PPVF), 1523–1630 (ITEE…APIF), 1639–1742 (VTEN…PPQF), 1749–1861 (TEVD…KPHF), 1870–1966 (VFED…APKF), and 1974–2085 (LPEH…QPGS). An N-linked (GlcNAc...) asparagine glycan is attached at N930. The N-linked (GlcNAc...) asparagine glycan is linked to N1266. 11 disulfides stabilise this stretch: C2346-C2357, C2351-C2366, C2368-C2377, C2559-C2585, C2592-C2607, C2601-C2616, C2618-C2627, C2787-C2822, C2869-C2880, C2874-C2891, and C2893-C2902. One can recognise an EGF-like 1 domain in the interval 2346 to 2377 (CRTTPCHNGGRCVDTRFGPHCSCPVGYTGPRC). The Laminin G-like 1 domain occupies 2379–2585 (QTTRSFRGNG…GLSRNSVAGC (207 aa)). In terms of domain architecture, EGF-like 2 spans 2592–2627 (CAQTETTARCWEHGNCVGSLSEARCHCRPGWTGPAC). One can recognise a Laminin G-like 2 domain in the interval 2631 to 2822 (TIPTTFKAQS…TMARNLEKGC (192 aa)). An EGF-like 3 domain is found at 2869–2902 (CLDMPCMNGATCINLEPRLRYRCICPDGFWGENC). The chain crosses the membrane as a helical span at residues 2917–2937 (ALAAILVCLLIILILVLVFVV). Topologically, residues 2938-3097 (YNRRREAHIK…PNPHNTELEL (160 aa)) are cytoplasmic.

In the embryo, the protein first appears in the mesoderm at stage 9 and is present in the myoblasts and muscle fibers by stage 12 and stage 14, respectively. At stage 12 the protein is also located in the axons of the entire CNS, but not in the glial cells. In third instar larvae protein is expressed in the CNS neuropile, photoreceptor axons and precursors of adult muscles.

The protein localises to the cell membrane. Cadherins are calcium-dependent cell adhesion proteins. They preferentially interact with themselves in a homophilic manner in connecting cells; cadherins may thus contribute to the sorting of heterogeneous cell types. May associate with arm neural isoform and participate in the transmission of developmental information. The polypeptide is Neural-cadherin (CadN) (Drosophila melanogaster (Fruit fly)).